The sequence spans 526 residues: Beta,beta-carotene 15,15'-dioxygenase (526 aa).

The Fe cation site is built by histidine 172, histidine 236, histidine 307, and histidine 512.

The protein belongs to the carotenoid oxygenase family. It depends on Fe(2+) as a cofactor.

The protein resides in the cytoplasm. The protein localises to the cytosol. It carries out the reaction all-trans-beta-carotene + O2 = 2 all-trans-retinal. The protein operates within cofactor metabolism; retinol metabolism. Its function is as follows. Symmetrically cleaves beta-carotene into two molecules of retinal using a dioxygenase mechanism. The polypeptide is Beta,beta-carotene 15,15'-dioxygenase (Gallus gallus (Chicken)).